The following is a 330-amino-acid chain: MTLQHKLAQFPRLDLVGNATPLEKLSRLSDYLGREIYIKRDDVTPLALGGNKLRKLEFLAADALRQGADTLVTAGAIQSNHVRQTAAVAAKLGLHCVALLENPIGTSQENYLTNGNRLLLDLFNVEVVMCDGLHDPNQQLAELATRIEAQGFRPYVVPVGGSNAFGALGYVQCALEIAAQSAGNVTFSSVVVASGSAGTHAGLAVGLQQLLPQTELIGVTVSRKAEEQRPKVIHIQQELATSLGVTSGPADITLWDDYFAPQYGMPNEEGLAAIGLLARLEGILLDPVYTGKAMAGLLDGLEQKKFRDDGPILFIHTGGAPALFAYHPQV.

Lys52 bears the N6-(pyridoxal phosphate)lysine mark.

This sequence belongs to the ACC deaminase/D-cysteine desulfhydrase family. In terms of assembly, homodimer. Pyridoxal 5'-phosphate serves as cofactor.

The enzyme catalyses D-cysteine + H2O = hydrogen sulfide + pyruvate + NH4(+) + H(+). Functionally, catalyzes the alpha,beta-elimination reaction of D-cysteine and of several D-cysteine derivatives. It could be a defense mechanism against D-cysteine. This is D-cysteine desulfhydrase from Yersinia enterocolitica serotype O:8 / biotype 1B (strain NCTC 13174 / 8081).